A 92-amino-acid chain; its full sequence is Probable Fe(2+)-trafficking protein (92 aa).

This sequence belongs to the Fe(2+)-trafficking protein family.

Could be a mediator in iron transactions between iron acquisition and iron-requiring processes, such as synthesis and/or repair of Fe-S clusters in biosynthetic enzymes. In Shewanella loihica (strain ATCC BAA-1088 / PV-4), this protein is Probable Fe(2+)-trafficking protein.